The primary structure comprises 156 residues: Glutamine--fructose-6-phosphate aminotransferase [isomerizing] (156 aa).

Residues 4-146 form the SIS domain; that stretch reads MAHHIVPARD…VLKGTDVDQP (143 aa). Residue Lys151 is the For Fru-6P isomerization activity of the active site.

Homodimer.

Its subcellular location is the cytoplasm. The enzyme catalyses D-fructose 6-phosphate + L-glutamine = D-glucosamine 6-phosphate + L-glutamate. Functionally, catalyzes the first step in hexosamine metabolism, converting fructose-6P into glucosamine-6P using glutamine as a nitrogen source. This chain is Glutamine--fructose-6-phosphate aminotransferase [isomerizing] (glmS), found in Sphingobium yanoikuyae (Sphingomonas yanoikuyae).